The primary structure comprises 766 residues: Subtilisin-like protease SBT3.13 (766 aa).

The signal sequence occupies residues 1–21 (MNNSLQSSKLVLLLAIALVLF). The propeptide at 22–120 (LNTELDFLTA…VIPNRIRKLK (99 aa)) is activation peptide. The Inhibitor I9 domain occupies 41-119 (VYIVYLGERE…HVIPNRIRKL (79 aa)). The Peptidase S8 domain maps to 134-618 (PTSFSSLSSV…GGLVNPEKAA (485 aa)). The active-site Charge relay system is Asp162. Asn195 and Asn223 each carry an N-linked (GlcNAc...) asparagine glycan. The active-site Charge relay system is the His239. N-linked (GlcNAc...) asparagine glycosylation is found at Asn254 and Asn389. Catalysis depends on Ser549, which acts as the Charge relay system. Asn641 is a glycosylation site (N-linked (GlcNAc...) asparagine).

This sequence belongs to the peptidase S8 family.

The protein localises to the secreted. The protein is Subtilisin-like protease SBT3.13 of Arabidopsis thaliana (Mouse-ear cress).